The chain runs to 219 residues: MAEISAKLVKELREKTGAGMMDCKKALKETDGNIDKATDWLRQKGIASAGKLEGKVATEGLVESYIHTGGRIGVLVEVNCQTDFVARNESFKELVKNVAMQIAACPQVEYVSVDDIPTEFVESEKSIEMGREDLSNKPENIREKIVQGRIGKRLKELTLMDQPYIRDQNKTIEELIKETSAQLGEKVQVRRFIRFVLGEGLEKQESNFAEEVAAQTGKK.

The involved in Mg(2+) ion dislocation from EF-Tu stretch occupies residues T82–V85.

The protein belongs to the EF-Ts family.

The protein localises to the cytoplasm. Functionally, associates with the EF-Tu.GDP complex and induces the exchange of GDP to GTP. It remains bound to the aminoacyl-tRNA.EF-Tu.GTP complex up to the GTP hydrolysis stage on the ribosome. This Trichodesmium erythraeum (strain IMS101) protein is Elongation factor Ts.